Consider the following 301-residue polypeptide: Coiled-coil domain-containing protein 69-B (301 aa).

The segment at 1-43 (MGSKTSKMCCPQLRKKKRQKAHKEGPSSQELNDLNAKSQGPNE) is disordered. Residue Gly2 is the site of N-myristoyl glycine attachment. Polar residues predominate over residues 26–41 (PSSQELNDLNAKSQGP). 2 coiled-coil regions span residues 42 to 167 (NELL…SILS) and 213 to 281 (KSTM…NLYR).

Belongs to the CCDC69 family.

The protein resides in the cytoplasm. The protein localises to the cytoskeleton. Its subcellular location is the spindle. It is found in the midbody. May act as a scaffold to regulate the recruitment and assembly of spindle midzone components. This is Coiled-coil domain-containing protein 69-B (ccdc69-b) from Xenopus laevis (African clawed frog).